The primary structure comprises 49 residues: uncharacterized protein (49 aa).

Belongs to the ELIP/psbS family.

Its subcellular location is the plastid. The protein resides in the cyanelle. Its function is as follows. Possible role in chlorophyll and/or carotenoid binding. This is an uncharacterized protein from Cyanophora paradoxa.